A 130-amino-acid polypeptide reads, in one-letter code: Small ribosomal subunit protein uS9 (130 aa).

It belongs to the universal ribosomal protein uS9 family.

The protein is Small ribosomal subunit protein uS9 of Streptococcus equi subsp. zooepidemicus (strain H70).